A 309-amino-acid chain; its full sequence is Glutaminase (309 aa).

Serine 64, asparagine 114, glutamate 160, asparagine 167, tyrosine 191, tyrosine 243, and valine 261 together coordinate substrate.

It belongs to the glutaminase family. Homotetramer.

It catalyses the reaction L-glutamine + H2O = L-glutamate + NH4(+). The protein is Glutaminase of Methylobacterium nodulans (strain LMG 21967 / CNCM I-2342 / ORS 2060).